The chain runs to 233 residues: MSFAAAQATYVLHSRPYKETSALVDFFTPLGRLRAVLRGARGKAGALARPFVPLEAEWRGRGELKTVARLESAGVPNLLNGQALFSGLYLNELLIRLLPAEDPQPEIFAHYAATLPLLAAGRPIEPLLRAFEWRLLEQLGYGFALDVDIDGRPIEPQALYQLLPEAGLEPVAQLQPGLFQGSELLSMADADWSAPGALAAAKRLMRQALAPHLGGRPLVSRELFMNRKESPRD.

It belongs to the RecO family.

Its function is as follows. Involved in DNA repair and RecF pathway recombination. The sequence is that of DNA repair protein RecO from Pseudomonas aeruginosa (strain LESB58).